Here is a 108-residue protein sequence, read N- to C-terminus: Tubulin-specific chaperone A (108 aa).

Ala-2 bears the N-acetylalanine mark.

It belongs to the TBCA family. As to quaternary structure, supercomplex made of cofactors A to E. Cofactors A and D function by capturing and stabilizing tubulin in a quasi-native conformation. Cofactor E binds to the cofactor D-tubulin complex; interaction with cofactor C then causes the release of tubulin polypeptides that are committed to the native state. As to expression, widely expressed, but is most abundant in the testis.

Its subcellular location is the cytoplasm. It is found in the cytoskeleton. Tubulin-folding protein; involved in the early step of the tubulin folding pathway. The chain is Tubulin-specific chaperone A (Tbca) from Mus musculus (Mouse).